An 858-amino-acid chain; its full sequence is Elongation factor 2 (858 aa).

The tr-type G domain maps to 17–362 (ANIRNMSVIA…MITIHLPSPV (346 aa)). 26-33 (AHVDHGKS) is a GTP binding site. Position 54 is a phosphothreonine (Thr54). A Phosphothreonine; by EEF2K modification is found at Thr57. Residue Thr59 is modified to Phosphothreonine. The residue at position 152 (Lys152) is an N6-succinyllysine. GTP is bound by residues 158–161 (NKMD) and 216–218 (SGL). Residue Lys235 is modified to N6-acetyllysine. Lys239 is subject to N6-acetyllysine; alternate. A Glycyl lysine isopeptide (Lys-Gly) (interchain with G-Cter in SUMO1); alternate cross-link involves residue Lys239. Tyr265 carries the phosphotyrosine; by CSK modification. Lys272 is subject to N6-acetyllysine; alternate. Position 272 is an N6-succinyllysine; alternate (Lys272). N6-acetyllysine is present on Lys275. Lys322 is covalently cross-linked (Glycyl lysine isopeptide (Lys-Gly) (interchain with G-Cter in SUMO)). The residue at position 325 (Ser325) is a Phosphoserine. Tyr373 bears the Phosphotyrosine; by CSK mark. Phosphothreonine is present on Thr435. Lys439 and Lys445 each carry N6-acetyllysine. Position 502 is a phosphoserine (Ser502). Lys525 bears the N6,N6,N6-trimethyllysine; by EEF2KMT mark. A Glycyl lysine isopeptide (Lys-Gly) (interchain with G-Cter in SUMO) cross-link involves residue Lys529. Lys572 bears the N6-succinyllysine mark. Ser595 carries the phosphoserine; by CDK2 modification. Lys619 carries the post-translational modification N6-acetyllysine. At His715 the chain carries Diphthamide.

This sequence belongs to the TRAFAC class translation factor GTPase superfamily. Classic translation factor GTPase family. EF-G/EF-2 subfamily. In terms of assembly, binds to 80S ribosomes. Actively translating ribosomes show mutually exclusive binding of eIF5a (EIF5A or EIF5A2) and EEF2/eEF2. Interacts with SERBP1; interaction sequesters EEF2/eEF2 at the A-site of the ribosome, thereby blocking the interaction sites of the mRNA-tRNA complex, promoting ribosome stabilization and hibernation. Interacts with HABP4; interaction takes place at the A-site of hibernating ribosomes and promotes ribosome stabilization. Component of the mRNA surveillance SURF complex, at least composed of ERF1, ERF3 (ERF3A or ERF3B), EEF2, UPF1/RENT1, SMG1, SMG8 and SMG9. Interacts with RBPMS2. In terms of processing, phosphorylation by EF-2 kinase completely inactivates EF-2; it requires prior phosphorylation by CDK2 at Ser-595 during mitotic prometaphase. Phosphorylation by CSK promotes SUMOylation, proteolytic cleavage, and nuclear translocation if the C-terminal fragment. Post-translationally, diphthamide is 2-[3-carboxyamido-3-(trimethyl-ammonio)propyl]histidine. ISGylated. In terms of processing, proteolytically processed at two sites following phosphorylation by CSK. Post-translationally, SUMOylated following phosphorylation by CSK, promotes proteolytic cleavage.

It is found in the cytoplasm. The protein resides in the nucleus. The enzyme catalyses GTP + H2O = GDP + phosphate + H(+). Functionally, catalyzes the GTP-dependent ribosomal translocation step during translation elongation. During this step, the ribosome changes from the pre-translocational (PRE) to the post-translocational (POST) state as the newly formed A-site-bound peptidyl-tRNA and P-site-bound deacylated tRNA move to the P and E sites, respectively. Catalyzes the coordinated movement of the two tRNA molecules, the mRNA and conformational changes in the ribosome. This is Elongation factor 2 (EEF2) from Pongo abelii (Sumatran orangutan).